A 395-amino-acid chain; its full sequence is S-adenosylmethionine synthase (395 aa).

An ATP-binding site is contributed by H16. Mg(2+) is bound at residue D18. E44 provides a ligand contact to K(+). L-methionine contacts are provided by E57 and Q100. A flexible loop region spans residues 100–110 (QSPDIAQGVDR). Residues 167-169 (DAK), 233-234 (RF), D242, 248-249 (RK), A265, and K269 each bind ATP. D242 serves as a coordination point for L-methionine. K273 contacts L-methionine.

Belongs to the AdoMet synthase family. Homotetramer; dimer of dimers. Requires Mg(2+) as cofactor. It depends on K(+) as a cofactor.

Its subcellular location is the cytoplasm. The catalysed reaction is L-methionine + ATP + H2O = S-adenosyl-L-methionine + phosphate + diphosphate. It participates in amino-acid biosynthesis; S-adenosyl-L-methionine biosynthesis; S-adenosyl-L-methionine from L-methionine: step 1/1. Catalyzes the formation of S-adenosylmethionine (AdoMet) from methionine and ATP. The overall synthetic reaction is composed of two sequential steps, AdoMet formation and the subsequent tripolyphosphate hydrolysis which occurs prior to release of AdoMet from the enzyme. This Burkholderia cenocepacia (strain HI2424) protein is S-adenosylmethionine synthase.